Here is a 411-residue protein sequence, read N- to C-terminus: 2,3-bisphosphoglycerate-independent phosphoglycerate mutase (411 aa).

The interval 164–190 (VSSNDPKKEGVQPLTIRPGSDDPADAK) is disordered.

Belongs to the BPG-independent phosphoglycerate mutase family. A-PGAM subfamily.

The catalysed reaction is (2R)-2-phosphoglycerate = (2R)-3-phosphoglycerate. It functions in the pathway carbohydrate degradation; glycolysis; pyruvate from D-glyceraldehyde 3-phosphate: step 3/5. Functionally, catalyzes the interconversion of 2-phosphoglycerate and 3-phosphoglycerate. The sequence is that of 2,3-bisphosphoglycerate-independent phosphoglycerate mutase from Methanoculleus marisnigri (strain ATCC 35101 / DSM 1498 / JR1).